Here is a 47-residue protein sequence, read N- to C-terminus: Photosystem II reaction center protein K (47 aa).

Residues 1–10 (MAAFTLDLMA) constitute a propeptide that is removed on maturation. The chain crosses the membrane as a helical span at residues 20–40 (APAVDVLPLIPIFFFLLVFVW).

The protein belongs to the PsbK family. In terms of assembly, PSII is composed of 1 copy each of membrane proteins PsbA, PsbB, PsbC, PsbD, PsbE, PsbF, PsbH, PsbI, PsbJ, PsbK, PsbL, PsbM, PsbT, PsbX, PsbY, Psb30/Ycf12, peripheral proteins PsbO, CyanoQ (PsbQ), PsbU, PsbV and a large number of cofactors. It forms dimeric complexes.

Its subcellular location is the cellular thylakoid membrane. In terms of biological role, one of the components of the core complex of photosystem II (PSII). PSII is a light-driven water:plastoquinone oxidoreductase that uses light energy to abstract electrons from H(2)O, generating O(2) and a proton gradient subsequently used for ATP formation. It consists of a core antenna complex that captures photons, and an electron transfer chain that converts photonic excitation into a charge separation. The polypeptide is Photosystem II reaction center protein K (Prochlorococcus marinus (strain MIT 9303)).